Reading from the N-terminus, the 295-residue chain is Formamidopyrimidine-DNA glycosylase (295 aa).

Proline 2 functions as the Schiff-base intermediate with DNA in the catalytic mechanism. The active-site Proton donor is glutamate 3. Lysine 61 functions as the Proton donor; for beta-elimination activity in the catalytic mechanism. Residues histidine 95, arginine 117, and arginine 159 each coordinate DNA. Residues 245–279 form an FPG-type zinc finger; the sequence is HAYGREGEACERCGTPIRRVAFMNRSSYFCPVCQP. Arginine 269 (proton donor; for delta-elimination activity) is an active-site residue.

The protein belongs to the FPG family. In terms of assembly, monomer. Zn(2+) is required as a cofactor.

It catalyses the reaction Hydrolysis of DNA containing ring-opened 7-methylguanine residues, releasing 2,6-diamino-4-hydroxy-5-(N-methyl)formamidopyrimidine.. It carries out the reaction 2'-deoxyribonucleotide-(2'-deoxyribose 5'-phosphate)-2'-deoxyribonucleotide-DNA = a 3'-end 2'-deoxyribonucleotide-(2,3-dehydro-2,3-deoxyribose 5'-phosphate)-DNA + a 5'-end 5'-phospho-2'-deoxyribonucleoside-DNA + H(+). Its function is as follows. Involved in base excision repair of DNA damaged by oxidation or by mutagenic agents. Acts as a DNA glycosylase that recognizes and removes damaged bases. Has a preference for oxidized purines, such as 7,8-dihydro-8-oxoguanine (8-oxoG). Has AP (apurinic/apyrimidinic) lyase activity and introduces nicks in the DNA strand. Cleaves the DNA backbone by beta-delta elimination to generate a single-strand break at the site of the removed base with both 3'- and 5'-phosphates. The polypeptide is Formamidopyrimidine-DNA glycosylase (Nocardioides sp. (strain ATCC BAA-499 / JS614)).